Here is a 125-residue protein sequence, read N- to C-terminus: uncharacterized protein (125 aa).

A run of 2 helical transmembrane segments spans residues 22–44 (TPLM…NAAV) and 54–73 (YMGI…SVLM).

Belongs to the bacteriophage holin family. Cp-1 holin subfamily.

It is found in the cell membrane. This is an uncharacterized protein from Clostridium acetobutylicum (strain ATCC 824 / DSM 792 / JCM 1419 / IAM 19013 / LMG 5710 / NBRC 13948 / NRRL B-527 / VKM B-1787 / 2291 / W).